Reading from the N-terminus, the 279-residue chain is Pantothenate synthetase (279 aa).

26–33 (MGNLHEGH) serves as a coordination point for ATP. His-33 functions as the Proton donor in the catalytic mechanism. Residue Gln-57 participates in (R)-pantoate binding. Position 57 (Gln-57) interacts with beta-alanine. 144 to 147 (GKKD) contributes to the ATP binding site. Gln-150 serves as a coordination point for (R)-pantoate. ATP is bound by residues Val-173 and 181–184 (LSSR).

This sequence belongs to the pantothenate synthetase family. Homodimer.

It localises to the cytoplasm. It carries out the reaction (R)-pantoate + beta-alanine + ATP = (R)-pantothenate + AMP + diphosphate + H(+). It functions in the pathway cofactor biosynthesis; (R)-pantothenate biosynthesis; (R)-pantothenate from (R)-pantoate and beta-alanine: step 1/1. Its function is as follows. Catalyzes the condensation of pantoate with beta-alanine in an ATP-dependent reaction via a pantoyl-adenylate intermediate. In Burkholderia cenocepacia (strain HI2424), this protein is Pantothenate synthetase.